The following is a 202-amino-acid chain: Small ribosomal subunit protein uS4c (202 aa).

The interval 13–37 (RRPGVSPGLTSKTLKSKSNYIDRST) is disordered. Residues 20 to 37 (GLTSKTLKSKSNYIDRST) show a composition bias toward polar residues. An S4 RNA-binding domain is found at 90 to 153 (MRLDNTIFRL…ESRSMISKNI (64 aa)).

The protein belongs to the universal ribosomal protein uS4 family. In terms of assembly, part of the 30S ribosomal subunit. Contacts protein S5. The interaction surface between S4 and S5 is involved in control of translational fidelity.

It is found in the plastid. The protein localises to the chloroplast. Its function is as follows. One of the primary rRNA binding proteins, it binds directly to 16S rRNA where it nucleates assembly of the body of the 30S subunit. In terms of biological role, with S5 and S12 plays an important role in translational accuracy. This Takakia lepidozioides (Moss) protein is Small ribosomal subunit protein uS4c (rps4).